The primary structure comprises 140 residues: Large ribosomal subunit protein uL11 (140 aa).

The protein belongs to the universal ribosomal protein uL11 family. In terms of assembly, part of the ribosomal stalk of the 50S ribosomal subunit. Interacts with L10 and the large rRNA to form the base of the stalk. L10 forms an elongated spine to which L12 dimers bind in a sequential fashion forming a multimeric L10(L12)X complex. One or more lysine residues are methylated.

Forms part of the ribosomal stalk which helps the ribosome interact with GTP-bound translation factors. The polypeptide is Large ribosomal subunit protein uL11 (Syntrophobacter fumaroxidans (strain DSM 10017 / MPOB)).